The primary structure comprises 425 residues: Interferon-activable protein 211 (425 aa).

The 88-residue stretch at 1 to 88 (MVNEYKRIVL…AEILKKERSE (88 aa)) folds into the Pyrin domain. A compositionally biased stretch (basic and acidic residues) spans 86 to 99 (RSEVTGETSLEKNG). Positions 86–223 (RSEVTGETSL…QNQNIPRGAV (138 aa)) are disordered. Over residues 122-153 (TSATQEETSTAQAGTSTAQAGTSTAQAGTSTA) the composition is skewed to low complexity. 4 repeat units span residues 129–135 (TSTAQAG), 136–142 (TSTAQAG), 143–149 (TSTAQAG), and 150–156 (TSTAQKR). Residues 129 to 177 (TSTAQAGTSTAQAGTSTAQAGTSTAQKRKSMREEETGVKKSKAAKEPDQ) form a 4 X 7 AA tandem repeats of T-S-T-A-Q-A-[GR] region. A compositionally biased stretch (basic and acidic residues) spans 159–176 (MREEETGVKKSKAAKEPD). Over residues 190–206 (SPILHSSSSASSNILSA) the composition is skewed to low complexity. The segment covering 207–218 (KNQKSQPQNQNI) has biased composition (polar residues). The region spanning 213-413 (PQNQNIPRGA…CGDHSFVKVT (201 aa)) is the HIN-200 domain.

It belongs to the HIN-200 family. As to quaternary structure, interacts with HOXB2. Mononuclear phagocytes.

The protein resides in the nucleus. In terms of biological role, inhibits cell growth via p53/TP53 and RB1-dependent and independent pathways. May work in synergy with TP53 to promote the transcription of CDKN1A/P21. The chain is Interferon-activable protein 211 from Mus musculus (Mouse).